A 182-amino-acid chain; its full sequence is Bifunctional protein PyrR (182 aa).

The short motif at 97 to 109 is the PRPP-binding element; the sequence is VVLVDDVIFRGRT.

It belongs to the purine/pyrimidine phosphoribosyltransferase family. PyrR subfamily.

It carries out the reaction UMP + diphosphate = 5-phospho-alpha-D-ribose 1-diphosphate + uracil. Its function is as follows. Regulates the transcription of the pyrimidine nucleotide (pyr) operon in response to exogenous pyrimidines. In terms of biological role, also displays a weak uracil phosphoribosyltransferase activity which is not physiologically significant. This is Bifunctional protein PyrR from Synechococcus sp. (strain JA-2-3B'a(2-13)) (Cyanobacteria bacterium Yellowstone B-Prime).